A 122-amino-acid polypeptide reads, in one-letter code: Small ribosomal subunit protein uS12 (122 aa).

The interval 1–45 (MPTTNQLVRKERKRQTKKTATPALQGSPQRRGVCTRVSTTTPKKP) is disordered. The span at 18–28 (KTATPALQGSP) shows a compositional bias: polar residues. At Asp89 the chain carries 3-methylthioaspartic acid.

Belongs to the universal ribosomal protein uS12 family. In terms of assembly, part of the 30S ribosomal subunit. Contacts proteins S8 and S17. May interact with IF1 in the 30S initiation complex.

In terms of biological role, with S4 and S5 plays an important role in translational accuracy. Interacts with and stabilizes bases of the 16S rRNA that are involved in tRNA selection in the A site and with the mRNA backbone. Located at the interface of the 30S and 50S subunits, it traverses the body of the 30S subunit contacting proteins on the other side and probably holding the rRNA structure together. The combined cluster of proteins S8, S12 and S17 appears to hold together the shoulder and platform of the 30S subunit. This is Small ribosomal subunit protein uS12 from Rubrobacter xylanophilus (strain DSM 9941 / JCM 11954 / NBRC 16129 / PRD-1).